Reading from the N-terminus, the 613-residue chain is MAFLSIPSPRRWAALLSLSLGPILGAADATSNSAADYYVRDLPGLPKDGPNIKMHAGHIEVTPESHGNLFFWHFENQHIADKQRTVIWINGGPGCSSEDGAMMEIGPYRLKDKENLYYNNGSWGEFANLLFVDNPVGTGYSLVDTNAYVKELDEMADQFIQFLEKWFALFPQYDRDDIYIAGESYAGQHIPYIAKAILDRNKKNPSKAWNLQGLLIGNGWISPVDQYPAYISFAHEKGIIEKGSDNDKKLQSALRGCERVIASSPGRVDYGECEEILKNILELTRDGNKCINMYDVRLTDTYPSCGMNWPPDLEYLTPYLGRKDVVDALHVTSMKSTGWKECSGAVGGAFTARNSKPAVELLPDLLKEVPVLLFSGAEDFICNHLGTEELISKLEWNGGKGFEVTPGNWAPRRDWTFEGETAGFWQEARNLTYVLIYNSSHMVPFDLPRRSRDMLDRFMGVDISNIGGDPTDSRIDGEKGPETTVGGASNKTQSAAQDHQKQLDEAKWAAYQKSGEVVLVIVIIAAIAWGYFVWRERRKGAAYHALANHDNNSHSNGFRAKSQPGDLESAAFDESELDDLHGSTPATATSARFPVNRNDTREKFVTKYAEPSS.

The signal sequence occupies residues 1–27; it reads MAFLSIPSPRRWAALLSLSLGPILGAA. Topologically, residues 28–513 are lumenal; it reads DATSNSAADY…DEAKWAAYQK (486 aa). A glycan (N-linked (GlcNAc...) asparagine) is linked at Asn120. Residues Ser184 and Asp379 contribute to the active site. N-linked (GlcNAc...) asparagine glycosylation is found at Asn430 and Asn438. The active site involves His441. A disordered region spans residues 466 to 499; it reads IGGDPTDSRIDGEKGPETTVGGASNKTQSAAQDH. Residues 471–481 show a composition bias toward basic and acidic residues; that stretch reads TDSRIDGEKGP. Over residues 486–497 the composition is skewed to polar residues; it reads GGASNKTQSAAQ. An N-linked (GlcNAc...) asparagine glycan is attached at Asn490. A helical membrane pass occupies residues 514 to 534; it reads SGEVVLVIVIIAAIAWGYFVW. Over 535–613 the chain is Cytoplasmic; sequence RERRKGAAYH…FVTKYAEPSS (79 aa). Positions 569–597 are disordered; it reads SAAFDESELDDLHGSTPATATSARFPVNR.

The protein belongs to the peptidase S10 family.

The protein localises to the golgi apparatus. The protein resides in the trans-Golgi network membrane. It carries out the reaction Preferential release of a C-terminal arginine or lysine residue.. Its function is as follows. Protease with a carboxypeptidase B-like function involved in the C-terminal processing of the lysine and arginine residues from protein precursors. Promotes cell fusion and is involved in the programmed cell death. The chain is Pheromone-processing carboxypeptidase KEX1 (KEX1) from Fusarium vanettenii (strain ATCC MYA-4622 / CBS 123669 / FGSC 9596 / NRRL 45880 / 77-13-4) (Fusarium solani subsp. pisi).